The primary structure comprises 227 residues: Uracil-DNA glycosylase (227 aa).

The Proton acceptor role is filled by D68.

The protein belongs to the uracil-DNA glycosylase (UDG) superfamily. UNG family.

The protein localises to the cytoplasm. The catalysed reaction is Hydrolyzes single-stranded DNA or mismatched double-stranded DNA and polynucleotides, releasing free uracil.. Functionally, excises uracil residues from the DNA which can arise as a result of misincorporation of dUMP residues by DNA polymerase or due to deamination of cytosine. This Mycolicibacterium smegmatis (strain ATCC 700084 / mc(2)155) (Mycobacterium smegmatis) protein is Uracil-DNA glycosylase.